Reading from the N-terminus, the 347-residue chain is Guanine nucleotide-binding protein alpha-5 subunit (347 aa).

Glycine 2 carries N-myristoyl glycine lipidation. Cysteine 3 is lipidated: S-palmitoyl cysteine. One can recognise a G-alpha domain in the interval 27–347; sequence NETKLLLLGP…KNIFNTIINY (321 aa). The G1 motif stretch occupies residues 30 to 43; that stretch reads KLLLLGPGESGKST. GTP-binding positions include 35–42, 170–176, 195–199, 264–267, and alanine 319; these read GPGESGKS, LRSRVRT, DVGGQ, and NKVD. Mg(2+)-binding residues include serine 42 and threonine 176. Residues 168 to 176 are G2 motif; that stretch reads DVLRSRVRT. Residues 191-200 form a G3 motif region; that stretch reads FRMLDVGGQR. Positions 260–267 are G4 motif; that stretch reads IIFFNKVD. Positions 317-322 are G5 motif; sequence TCAIDT.

Belongs to the G-alpha family. G(q) subfamily. G proteins are composed of 3 units; alpha, beta and gamma. The alpha chain contains the guanine nucleotide binding site.

Functionally, guanine nucleotide-binding proteins (G proteins) are involved as modulators or transducers in various transmembrane signaling systems. The polypeptide is Guanine nucleotide-binding protein alpha-5 subunit (gpaE) (Dictyostelium discoideum (Social amoeba)).